Reading from the N-terminus, the 331-residue chain is DNA-directed RNA polymerase subunit alpha (331 aa).

The interval 1–225 (MLDIAMPKLE…QYSSIIADFN (225 aa)) is alpha N-terminal domain (alpha-NTD). Residues 243–331 (PSEIYDMPIE…AARLNDGSAE (89 aa)) form an alpha C-terminal domain (alpha-CTD) region.

The protein belongs to the RNA polymerase alpha chain family. As to quaternary structure, homodimer. The RNAP catalytic core consists of 2 alpha, 1 beta, 1 beta' and 1 omega subunit. When a sigma factor is associated with the core the holoenzyme is formed, which can initiate transcription.

The catalysed reaction is RNA(n) + a ribonucleoside 5'-triphosphate = RNA(n+1) + diphosphate. Functionally, DNA-dependent RNA polymerase catalyzes the transcription of DNA into RNA using the four ribonucleoside triphosphates as substrates. The polypeptide is DNA-directed RNA polymerase subunit alpha (Herpetosiphon aurantiacus (strain ATCC 23779 / DSM 785 / 114-95)).